The following is a 382-amino-acid chain: Protein arginine N-methyltransferase 2 (382 aa).

ANK repeat units follow at residues 22-46 (AAQT…FQDD) and 48-80 (LGWS…AVDK). The 249-residue stretch at 134 to 382 (KTSAGDNLVF…RLPIAKMSLI (249 aa)) folds into the RMT2 domain. S-adenosyl-L-methionine contacts are provided by residues Phe-143, Met-177, 205 to 210 (FGLGIV), 228 to 230 (EAH), 255 to 256 (WQ), and Asp-284.

The protein belongs to the class I-like SAM-binding methyltransferase superfamily. RMT2 methyltransferase family. As to quaternary structure, monomer.

It localises to the cytoplasm. Its subcellular location is the nucleus. Its function is as follows. S-adenosyl-L-methionine-dependent protein-arginine N-methyltransferase that methylates the delta-nitrogen atom of arginine residues to form N5-methylarginine (type IV) in target proteins. Monomethylates ribosomal protein L12. The chain is Protein arginine N-methyltransferase 2 from Cryptococcus neoformans var. neoformans serotype D (strain JEC21 / ATCC MYA-565) (Filobasidiella neoformans).